The chain runs to 55 residues: Large ribosomal subunit protein bL33 (55 aa).

The protein belongs to the bacterial ribosomal protein bL33 family.

The polypeptide is Large ribosomal subunit protein bL33 (Bartonella bacilliformis (strain ATCC 35685 / KC583 / Herrer 020/F12,63)).